The sequence spans 772 residues: Bromo adjacent homology domain-containing 1 protein (772 aa).

Disordered regions lie at residues 1 to 63 (MTHT…RSLV) and 77 to 117 (LENV…PRKR). Phosphoserine is present on serine 8. Basic residues predominate over residues 49 to 61 (TGRRKNYPLRKRS). A phosphoserine mark is found at serine 101 and serine 121. Disordered stretches follow at residues 131 to 357 (LLER…PADY), 521 to 582 (QTVA…RTNG), and 723 to 743 (PSRK…PHRT). Composition is skewed to basic and acidic residues over residues 147-158 (RGGDPHRSRDRA), 170-182 (RLGD…RDLS), and 189-199 (EGARRDGDPAP). Serine 182 carries the post-translational modification Phosphoserine. Position 204 is a phosphoserine (serine 204). A compositionally biased stretch (pro residues) spans 280–289 (SAPPHGPPTQ). Residues 299–310 (LENPLRPNLPLL) show a composition bias toward low complexity. Over residues 340 to 352 (FPAPQLSPLPMPG) the composition is skewed to pro residues. Polar residues predominate over residues 536–548 (GSKSGLRTGSSCR). Over residues 549 to 580 (HTVRSKAARRPSHPKQPRAQRPRPRRRRRRRT) the composition is skewed to basic residues. Threonine 580 carries the phosphothreonine modification. Positions 616–771 (ETIRVRDTVL…FRHGRILKNP (156 aa)) constitute a BAH domain.

As to quaternary structure, interacts with CBX5 (HP1 alpha), HDAC5, MBD1 and SP1. In terms of processing, ubiquitinated in a FBXO11-dependent manner; leading to degradation.

The protein resides in the nucleus. Its subcellular location is the chromosome. Its function is as follows. Heterochromatin protein that acts as a transcription repressor and has the ability to promote the formation of large heterochromatic domains. May act by recruiting heterochromatin proteins such as CBX5 (HP1 alpha), HDAC5 and MBD1. Represses IGF2 expression by binding to its CpG-rich P3 promoter and recruiting heterochromatin proteins. The chain is Bromo adjacent homology domain-containing 1 protein (Bahd1) from Mus musculus (Mouse).